Reading from the N-terminus, the 806-residue chain is DNA topoisomerase 1 (806 aa).

Residues 1–15 are compositionally biased toward low complexity; the sequence is MSVVSNHHSNGNGNS. Residues 1–236 are disordered; it reads MSVVSNHHSN…KKEPPKKKVK (236 aa). Basic and acidic residues predominate over residues 24–34; the sequence is DEIKKEVKDEP. Composition is skewed to basic residues over residues 49–60 and 98–108; these read RDKKEKKQKKRK and EKKKSKKNNKK. Residues 113-127 show a composition bias toward acidic residues; that stretch reads SSEDDDEESEGDVSE. Basic and acidic residues predominate over residues 128–137; the sequence is EDVKPQIHSD. Positions 138–153 are enriched in acidic residues; the sequence is DELEEEDEAPTTDDEE. Residues 159–176 show a composition bias toward basic residues; sequence EKERRKKEKREKKERKEK. Basic and acidic residues predominate over residues 177 to 188; it reads KRLEKENRKIKE. The segment covering 189 to 199 has biased composition (acidic residues); that stretch reads EDDEDSDDEDD. Over residues 210-229 the composition is skewed to basic and acidic residues; the sequence is KGAEKSKPSTSKKDAGGKKE. Interaction with DNA stretches follow at residues 467 to 468, 530 to 535, and 634 to 636; these read KY, RAGNEK, and TVK. Positions 474–803 constitute a Topo IB-type catalytic domain; that stretch reads SSKIKGEKDF…IDMTNSSDEE (330 aa). Catalysis depends on Tyr-761, which acts as the O-(3'-phospho-DNA)-tyrosine intermediate.

This sequence belongs to the type IB topoisomerase family. Expressed in male germ cells and in mature sperm.

It is found in the nucleus. It localises to the nucleolus. Its subcellular location is the chromosome. It catalyses the reaction ATP-independent breakage of single-stranded DNA, followed by passage and rejoining.. Its function is as follows. Releases the supercoiling and torsional tension of DNA introduced during the DNA replication and transcription by transiently cleaving and rejoining one strand of the DNA duplex. Introduces a single-strand break via transesterification at a target site in duplex DNA. The scissile phosphodiester is attacked by the catalytic tyrosine of the enzyme, resulting in the formation of a DNA-(3'-phosphotyrosyl)-enzyme intermediate and the expulsion of a 5'-OH DNA strand. The free DNA strand then rotates around the intact phosphodiester bond on the opposing strand, thus removing DNA supercoils. Finally, in the religation step, the DNA 5'-OH attacks the covalent intermediate to expel the active-site tyrosine and restore the DNA phosphodiester backbone. Required for normal spermatogenesis and oogenesis. The sequence is that of DNA topoisomerase 1 (top-1) from Caenorhabditis elegans.